The chain runs to 669 residues: NSTMRRKVEQEGYLQESSKAGLPSATTGFQKSSHLMAFAHNPPAGPLPGAGQAPLGSDYPYYHIAEPQNVPGQIPYPVALHVNIVNVPQPAAAAIQRHYNDEDPEKEKRIKELELLLMSTENELKGQQALPTQNHTANYPGWHSTTVADNTMTSGDNAPVSCLGEHHHCTPSPPVDHGTSEMMSYYMDTTIGSTGPYPLARPGVMQGASSCCEDPWMPCRLQSACCPPRSCCPPWDEAAIQEVPTGLEHYSTDMECADVPLLTPSSKEMMSQALKATFSGFAKEQQRLGIPKDPQQWTETHVRDWVMWAVNEFSLKGVDFQKFCMNGAALCALGKECFLELAPDFVGDILWEHLEILQKEEAKPYPANGVNAAYPESRYTSDYFISYGIEHAQCVPPSEFSEPSFITESYQTLHPISSEELLSLKYENDYPSVILRDPVQTDSLQTDYFTIKQEVVTPDNMCMGRVSRGKLGGQDSFESIESYDSCDRLTQSWSSQSSFQSLQRVPSYDSFDSEDYPAALPNHKPKGTFKDYVRDRADMNKDKPVIPAAALAGYTGSGPIQLWQFLLELLTDKSCQSFISWTGDGWEFKLSDPDEVARRWGKRKNKPKMDYEKLSRGLRYYYDKNVIHKTAGKRYVYRFVCDLQSLLGYTPEEHSSASGLTSSMACSSF.

Residues 1–10 (NSTMRRKVEQ) show a composition bias toward basic and acidic residues. Disordered stretches follow at residues 1–27 (NSTM…SATT) and 132–153 (TQNH…NTMT). The transcriptional activation domain stretch occupies residues 90-142 (PAAAAIQRHYNDEDPEKEKRIKELELLLMSTENELKGQQALPTQNHTANYPGW). The 86-residue stretch at 276-361 (ATFSGFAKEQ…EHLEILQKEE (86 aa)) folds into the PNT domain. The ETS DNA-binding region spans 556–640 (GSGPIQLWQF…AGKRYVYRFV (85 aa)).

It localises to the host nucleus. Its function is as follows. DNA-binding protein that specifically recognizes the sequence 5'-YAAC[GT]G-3'. The Myb-Ets protein induces predominantly erythroblastosis in chicken and transforms avian erythroblasts and immature myelomonocytic cells in culture. It appears that the Ets domain is responsible for the effects on erythroid cells and that the Myb domain encodes the myeloid-transforming capacity. This is p135Gag-Myb-Ets-transforming protein (GAG) from Avian leukemia virus E26.